Here is a 1403-residue protein sequence, read N- to C-terminus: DNA-directed RNA polymerase subunit beta' (1403 aa).

C69, C71, C84, and C87 together coordinate Zn(2+). Positions 461, 463, and 465 each coordinate Mg(2+). Positions 818, 891, 898, and 901 each coordinate Zn(2+). Residues 1384–1403 (LELLRNEGEDETGNEELVAE) are disordered. Residues 1391 to 1403 (GEDETGNEELVAE) are compositionally biased toward acidic residues.

Belongs to the RNA polymerase beta' chain family. In terms of assembly, the RNAP catalytic core consists of 2 alpha, 1 beta, 1 beta' and 1 omega subunit. When a sigma factor is associated with the core the holoenzyme is formed, which can initiate transcription. The cofactor is Mg(2+). Zn(2+) is required as a cofactor.

It catalyses the reaction RNA(n) + a ribonucleoside 5'-triphosphate = RNA(n+1) + diphosphate. In terms of biological role, DNA-dependent RNA polymerase catalyzes the transcription of DNA into RNA using the four ribonucleoside triphosphates as substrates. The sequence is that of DNA-directed RNA polymerase subunit beta' from Koribacter versatilis (strain Ellin345).